The primary structure comprises 504 residues: Maturase K (504 aa).

The protein belongs to the intron maturase 2 family. MatK subfamily.

Its subcellular location is the plastid. The protein localises to the chloroplast. Functionally, usually encoded in the trnK tRNA gene intron. Probably assists in splicing its own and other chloroplast group II introns. The sequence is that of Maturase K from Fagus hayatae (Formosan elm).